Consider the following 90-residue polypeptide: Evasin P1126 (90 aa).

A signal peptide spans 1-25; that stretch reads MTSHSAVRIAIFAVIALHSIFECLS. Disulfide bonds link C46-C62, C50-C64, and C58-C75. A glycan (N-linked (GlcNAc...) asparagine) is linked at N55. Residue N77 is glycosylated (N-linked (GlcNAc...) asparagine).

The protein resides in the secreted. Salivary chemokine-binding protein which binds to host chemokines CXCL1, CXCL2, CXCL3, CXCL4, CXCL5, CXCL6, CXCL7, CXCL10 and CXCL11. The chain is Evasin P1126 from Amblyomma cajennense (Cayenne tick).